The primary structure comprises 332 residues: UPF0194 membrane protein YbhG (332 aa).

An N-terminal signal peptide occupies residues 1 to 16 (MMKKPVVIGLAVVVLA). Positions 141–210 (RTISANDLEN…NLQDSTLIAP (70 aa)) form a coiled coil.

Belongs to the UPF0194 family.

The protein resides in the periplasm. This is UPF0194 membrane protein YbhG (ybhG) from Shigella flexneri.